Consider the following 249-residue polypeptide: Isoprenyl transferase (249 aa).

D25 is an active-site residue. D25 contributes to the Mg(2+) binding site. Residues 26–29 (GNGR), W30, R38, H42, and 70–72 (STE) each bind substrate. N73 acts as the Proton acceptor in catalysis. Substrate contacts are provided by residues W74, R76, R197, and 203–205 (RLS). Position 216 (E216) interacts with Mg(2+).

It belongs to the UPP synthase family. As to quaternary structure, homodimer. The cofactor is Mg(2+).

Catalyzes the condensation of isopentenyl diphosphate (IPP) with allylic pyrophosphates generating different type of terpenoids. This chain is Isoprenyl transferase, found in Streptococcus pyogenes serotype M6 (strain ATCC BAA-946 / MGAS10394).